A 122-amino-acid chain; its full sequence is Small ribosomal subunit protein uS13 (122 aa).

The tract at residues 94-122 is disordered; that stretch reads KKLPVRGQRTHTNARTRKGPAKPIAGKKK.

This sequence belongs to the universal ribosomal protein uS13 family. In terms of assembly, part of the 30S ribosomal subunit. Forms a loose heterodimer with protein S19. Forms two bridges to the 50S subunit in the 70S ribosome.

Its function is as follows. Located at the top of the head of the 30S subunit, it contacts several helices of the 16S rRNA. In the 70S ribosome it contacts the 23S rRNA (bridge B1a) and protein L5 of the 50S subunit (bridge B1b), connecting the 2 subunits; these bridges are implicated in subunit movement. Contacts the tRNAs in the A and P-sites. This is Small ribosomal subunit protein uS13 from Hyphomonas neptunium (strain ATCC 15444).